A 199-amino-acid chain; its full sequence is Dephospho-CoA kinase (199 aa).

In terms of domain architecture, DPCK spans 3-199 (RIGLTGGIGS…HCKYLQIAQT (197 aa)). 11–16 (GSGKST) is an ATP binding site.

Belongs to the CoaE family.

It is found in the cytoplasm. The catalysed reaction is 3'-dephospho-CoA + ATP = ADP + CoA + H(+). It participates in cofactor biosynthesis; coenzyme A biosynthesis; CoA from (R)-pantothenate: step 5/5. Catalyzes the phosphorylation of the 3'-hydroxyl group of dephosphocoenzyme A to form coenzyme A. In Coxiella burnetii (strain RSA 493 / Nine Mile phase I), this protein is Dephospho-CoA kinase.